Consider the following 531-residue polypeptide: MLSKALFFSSLPLWAKVASAAFGITTTDSSYTIDAGSPNPLKFTVSRSSCDITSINYYGSELQYQSKGSHIGSGLGSASVSAVQNGDYIKVTCDTDTLTHYFVVHSGDPIIHMATYITAEPSIGELRFIARLNSNLLPNEEPFGDVSTTAGGSAIEGSDVFLVNGQTRSKFYSSQRFIDDQRHCISGSAHRVCMILNQYESSSGGPFHRDINSNNGGDYNSLYWYMNSGHVQTESYRMGLHGPYSMYFSRSGTPGTNIDTSFFANLDIKGYVPASGRGTVTGKASGADSNFKWVVHWYNDAAQYWTYTASDGSFTSPAMKPGTYTMAYYQGEYRVAETSVTVSAGSSTTKNISGSVKTGTTIFKIGDWDGQPTGFLNADKQLRMHPSDSRMSSWGPVTYTVGSSSVGSFPMALFKSVNSPVTIKFTATSAQTGAATLRIGTTLSFAGGRPQATINSYTGPTPSAPTNLNSRGVTRGAYRGLGEVYDVSIPAGTIVAGTNTITINVISGSSGDDFLSPNFVSAYPFLTLMRC.

The first 20 residues, 1-20, serve as a signal peptide directing secretion; sequence MLSKALFFSSLPLWAKVASA. 2 cysteine pairs are disulfide-bonded: Cys-50–Cys-93 and Cys-184–Cys-193. Residue Asn-351 is glycosylated (N-linked (GlcNAc...) asparagine).

This sequence belongs to the polysaccharide lyase 4 family.

It is found in the secreted. It catalyses the reaction Endotype eliminative cleavage of L-alpha-rhamnopyranosyl-(1-&gt;4)-alpha-D-galactopyranosyluronic acid bonds of rhamnogalacturonan I domains in ramified hairy regions of pectin leaving L-rhamnopyranose at the reducing end and 4-deoxy-4,5-unsaturated D-galactopyranosyluronic acid at the non-reducing end.. Pectinolytic enzymes consist of four classes of enzymes: pectin lyase, polygalacturonase, pectin methylesterase and rhamnogalacturonase. Degrades the rhamnogalacturonan I (RG-I) backbone of pectin. This is Probable rhamnogalacturonate lyase A (rglA) from Aspergillus terreus (strain NIH 2624 / FGSC A1156).